A 260-amino-acid polypeptide reads, in one-letter code: Ribosomal RNA small subunit methyltransferase G (260 aa).

S-adenosyl-L-methionine-binding residues include G111, F116, and R181.

The protein belongs to the methyltransferase superfamily. RNA methyltransferase RsmG family.

The protein resides in the cytoplasm. The enzyme catalyses guanosine(527) in 16S rRNA + S-adenosyl-L-methionine = N(7)-methylguanosine(527) in 16S rRNA + S-adenosyl-L-homocysteine. Its function is as follows. Specifically methylates the N7 position of guanine in position 527 of 16S rRNA. This is Ribosomal RNA small subunit methyltransferase G from Nitrobacter hamburgensis (strain DSM 10229 / NCIMB 13809 / X14).